Consider the following 520-residue polypeptide: Nucleolar protein 12 (520 aa).

2 disordered regions span residues 1–29 and 41–185; these read MGKKSKSQKEAPATESAGSLPFLGGNVSV and AGPV…DDDE. A compositionally biased stretch (acidic residues) spans 78–95; the sequence is ASEDQFMEDAPESPDAAE. Over residues 120–132 the composition is skewed to basic and acidic residues; the sequence is SYMRRLAKEEQKE. Positions 144 to 168 are enriched in acidic residues; that stretch reads LEEESEDGEKESPQSEDGESEDEGA. 2 RRM domains span residues 191–303 and 311–421; these read RTVF…NVAH and RCVF…RAKK. Positions 472-520 are disordered; sequence EGNRATADGSSRIRVRTKSRGSKAKKDSRSKKRAAAYKAAGGKKAKIGK. Positions 484-520 are enriched in basic residues; it reads IRVRTKSRGSKAKKDSRSKKRAAAYKAAGGKKAKIGK.

It belongs to the RRM RBM34 family.

It is found in the nucleus. Its subcellular location is the nucleolus. Involved in pre-25S rRNA processing. In Emericella nidulans (strain FGSC A4 / ATCC 38163 / CBS 112.46 / NRRL 194 / M139) (Aspergillus nidulans), this protein is Nucleolar protein 12 (nop12).